A 507-amino-acid chain; its full sequence is ATP synthase subunit alpha, chloroplastic (507 aa).

170–177 contacts ATP; sequence GDRQTGKT.

This sequence belongs to the ATPase alpha/beta chains family. F-type ATPases have 2 components, CF(1) - the catalytic core - and CF(0) - the membrane proton channel. CF(1) has five subunits: alpha(3), beta(3), gamma(1), delta(1), epsilon(1). CF(0) has four main subunits: a, b, b' and c.

It localises to the plastid. The protein localises to the chloroplast thylakoid membrane. It carries out the reaction ATP + H2O + 4 H(+)(in) = ADP + phosphate + 5 H(+)(out). In terms of biological role, produces ATP from ADP in the presence of a proton gradient across the membrane. The alpha chain is a regulatory subunit. The sequence is that of ATP synthase subunit alpha, chloroplastic from Ipomoea purpurea (Common morning glory).